Consider the following 403-residue polypeptide: Microtubule-associated protein tau (403 aa).

Over residues 1 to 32 (MAEPRQEFDVMEDHAQGDYTLQDHEGDMEPGL) the composition is skewed to basic and acidic residues. The tract at residues 1–219 (MAEPRQEFDV…GPMPDLKNVK (219 aa)) is disordered. N-acetylalanine is present on Ala2. Position 19 is a phosphotyrosine (Tyr19). A Glycyl lysine isopeptide (Lys-Gly) (interchain with G-Cter in ubiquitin) cross-link involves residue Lys33. Residues Ser35 and Ser50 each carry the phosphoserine modification. The span at 50-60 (SETSDAKSTPT) shows a compositional bias: polar residues. Residues Thr58, Thr60, and Thr71 each carry the phosphothreonine modification. Residues 90–106 (KGKDGTGPDDKKAKGAD) show a composition bias toward basic and acidic residues. Thr115 carries the post-translational modification Phosphothreonine. At Arg117 the chain carries Omega-N-methylarginine. Lys125 carries the post-translational modification N6,N6-dimethyllysine; alternate. Residue Lys125 is modified to N6-acetyllysine; alternate. Residues Thr131, Thr137, Thr138, and Thr143 each carry the phosphothreonine modification. A compositionally biased stretch (low complexity) spans 136–147 (KTTPTPKTSPGT). Phosphoserine occurs at positions 153 and 157. The span at 156-176 (RSGYSSPGSPGTPGSRSRTPS) shows a compositional bias: low complexity. Tyr159 is modified (phosphotyrosine). Residues Ser160, Ser161, and Ser164 each carry the phosphoserine modification. A phosphothreonine mark is found at Thr167 and Thr174. Ser176 carries the phosphoserine modification. Residue Thr179 is modified to Phosphothreonine. Lys187 bears the N6-acetyllysine mark. Thr193 carries the post-translational modification Phosphothreonine. A phosphoserine mark is found at Ser197 and Ser199. Tau/MAP repeat units lie at residues 206–236 (QAAP…GGGK), 237–267 (VQII…GGGS), 268–298 (VQIV…GGGQ), and 299–330 (VEVK…GGGN). Lys216 is covalently cross-linked (Glycyl lysine isopeptide (Lys-Gly) (interchain with G-Cter in ubiquitin)). The residue at position 221 (Lys221) is an N6-acetyllysine; alternate. At Lys221 the chain carries N6-methyllysine; alternate. Residue Lys221 forms a Glycyl lysine isopeptide (Lys-Gly) (interchain with G-Cter in ubiquitin); alternate linkage. Ser224 carries the phosphoserine modification. Lys229 participates in a covalent cross-link: Glycyl lysine isopeptide (Lys-Gly) (interchain with G-Cter in ubiquitin). N6-acetyllysine; alternate is present on Lys243. A Glycyl lysine isopeptide (Lys-Gly) (interchain with G-Cter in ubiquitin); alternate cross-link involves residue Lys243. 2 positions are modified to phosphoserine: Ser247 and Ser251. Lys252 carries the N6-acetyllysine modification. A disulfide bridge links Cys253 with Cys284. Phosphoserine is present on Ser255. Lys260 is subject to N6-acetyllysine; alternate. A Glycyl lysine isopeptide (Lys-Gly) (interchain with G-Cter in ubiquitin); alternate cross-link involves residue Lys260. Phosphoserine is present on Ser267. Lys273 is modified (N6,N6-dimethyllysine; alternate). An N6-acetyllysine; alternate mark is found at Lys273, Lys279, and Lys283. Residues Lys273, Lys279, and Lys283 each participate in a glycyl lysine isopeptide (Lys-Gly) (interchain with G-Cter in ubiquitin); alternate cross-link. Ser286 bears the Phosphoserine mark. Lys293, Lys305, and Lys309 each carry N6-acetyllysine; alternate. Glycyl lysine isopeptide (Lys-Gly) (interchain with G-Cter in ubiquitin); alternate cross-links involve residues Lys293, Lys305, and Lys309. At Arg311 the chain carries Omega-N-methylarginine. The residue at position 314 (Ser314) is a Phosphoserine. Lys315 participates in a covalent cross-link: Glycyl lysine isopeptide (Lys-Gly) (interchain with G-Cter in ubiquitin). Ser318 bears the Phosphoserine mark. Lys331 bears the N6-acetyllysine; alternate mark. Lys331 participates in a covalent cross-link: Glycyl lysine isopeptide (Lys-Gly) (interchain with G-Cter in ubiquitin); alternate. Lys337 is covalently cross-linked (Glycyl lysine isopeptide (Lys-Gly) (interchain with G-Cter in ubiquitin)). Lys347 carries the N6-acetyllysine; alternate modification. Lys347 participates in a covalent cross-link: Glycyl lysine isopeptide (Lys-Gly) (interchain with G-Cter in ubiquitin); alternate. The residue at position 356 (Tyr356) is a Phosphotyrosine. Phosphoserine occurs at positions 358 and 362. The interval 360-379 (VVSGDTSPRHLSNVSSTGSI) is disordered. Polar residues predominate over residues 363 to 378 (GDTSPRHLSNVSSTGS). Thr365 bears the Phosphothreonine mark. A phosphoserine mark is found at Ser366, Ser371, Ser378, and Ser384. Thr389 carries the post-translational modification Phosphothreonine.

In terms of assembly, interacts with MARK1, MARK2, MARK3 and MARK4. Interacts with SQSTM1 when polyubiquitinated. Interacts with PSMC2 through SQSTM1. Interacts with FKBP4. Binds to CSNK1D. Interacts with SGK1. Interacts with PIN1. Interacts with LRRK2. Interacts with LRP1, leading to endocytosis; this interaction is reduced in the presence of LRPAP1/RAP. In terms of processing, polyubiquitinated. Requires functional TRAF6 and may provoke SQSTM1-dependent degradation by the proteasome. Phosphorylation at various serine and threonine residues in S-P or T-P motifs by proline-directed protein kinases (PDPK1, CDK1, CDK5, GSK3, MAPK) (a few sites per protein in interphase, more in mitosis), and at serine residues in K-X-G-S motifs by MAP/microtubule affinity-regulating kinase (MARK1, MARK2, MARK3, MARK4), causing detachment from microtubules, and their disassembly. Phosphorylation at Ser-224 by BRSK1 and BRSK2 in neurons affects ability to bind microtubules and plays a role in neuron polarization. Phosphorylated by PHK. Dephosphorylation at several serine and threonine residues by the serine/threonine phosphatase PPP5C. Expressed in neurons.

The protein resides in the cytoplasm. Its subcellular location is the cytosol. It is found in the cell membrane. It localises to the cytoskeleton. The protein localises to the cell projection. The protein resides in the axon. Its subcellular location is the dendrite. Promotes microtubule assembly and stability, and might be involved in the establishment and maintenance of neuronal polarity. The C-terminus binds axonal microtubules while the N-terminus binds neural plasma membrane components, suggesting that tau functions as a linker protein between both. Axonal polarity is predetermined by tau localization (in the neuronal cell) in the domain of the cell body defined by the centrosome. The short isoforms allow plasticity of the cytoskeleton whereas the longer isoforms may preferentially play a role in its stabilization. This chain is Microtubule-associated protein tau (MAPT), found in Capra hircus (Goat).